The chain runs to 286 residues: Pantothenate synthetase (286 aa).

Residue 30–37 coordinates ATP; the sequence is MGNLHEGH. His37 acts as the Proton donor in catalysis. Residue Gln61 participates in (R)-pantoate binding. Beta-alanine is bound at residue Gln61. 149 to 152 contributes to the ATP binding site; it reads GRKD. Residue Gln155 coordinates (R)-pantoate. ATP-binding positions include Val178 and 186-189; that span reads MSSR.

Belongs to the pantothenate synthetase family. Homodimer.

It is found in the cytoplasm. It catalyses the reaction (R)-pantoate + beta-alanine + ATP = (R)-pantothenate + AMP + diphosphate + H(+). It functions in the pathway cofactor biosynthesis; (R)-pantothenate biosynthesis; (R)-pantothenate from (R)-pantoate and beta-alanine: step 1/1. In terms of biological role, catalyzes the condensation of pantoate with beta-alanine in an ATP-dependent reaction via a pantoyl-adenylate intermediate. This Alkalilimnicola ehrlichii (strain ATCC BAA-1101 / DSM 17681 / MLHE-1) protein is Pantothenate synthetase.